Consider the following 168-residue polypeptide: Phosphopantetheine adenylyltransferase (168 aa).

Thr9 provides a ligand contact to substrate. ATP is bound by residues 9–10 (TF) and His17. The substrate site is built by Lys41, Leu73, and Arg87. ATP-binding positions include 88 to 90 (GLR), Glu98, and 123 to 129 (YQFISGT).

Belongs to the bacterial CoaD family. Homohexamer. The cofactor is Mg(2+).

It is found in the cytoplasm. It carries out the reaction (R)-4'-phosphopantetheine + ATP + H(+) = 3'-dephospho-CoA + diphosphate. The protein operates within cofactor biosynthesis; coenzyme A biosynthesis; CoA from (R)-pantothenate: step 4/5. Functionally, reversibly transfers an adenylyl group from ATP to 4'-phosphopantetheine, yielding dephospho-CoA (dPCoA) and pyrophosphate. In Ralstonia nicotianae (strain ATCC BAA-1114 / GMI1000) (Ralstonia solanacearum), this protein is Phosphopantetheine adenylyltransferase.